The following is a 354-amino-acid chain: Neutral protease 2 homolog AN7962 (354 aa).

The signal sequence occupies residues 1–19 (MKFIAPIALLGMFQAASAS). The propeptide occupies 20–178 (PVDIKTSNAG…GAQLSKLSKR (159 aa)). Cystine bridges form between Cys-184–Cys-255 and Cys-262–Cys-280. Residue His-305 coordinates Zn(2+). Glu-306 is a catalytic residue. His-309 and Asp-320 together coordinate Zn(2+).

It belongs to the peptidase M35 family. It depends on Zn(2+) as a cofactor.

The protein resides in the secreted. It carries out the reaction Preferential cleavage of bonds with hydrophobic residues in P1'. Also 3-Asn-|-Gln-4 and 8-Gly-|-Ser-9 bonds in insulin B chain.. In terms of biological role, secreted metalloproteinase that allows assimilation of proteinaceous substrates. Shows high activities on basic nuclear substrates such as histone and protamine. The polypeptide is Neutral protease 2 homolog AN7962 (Emericella nidulans (strain FGSC A4 / ATCC 38163 / CBS 112.46 / NRRL 194 / M139) (Aspergillus nidulans)).